A 348-amino-acid chain; its full sequence is N-formyl peptide receptor 2 (348 aa).

N-linked (GlcNAc...) asparagine glycosylation is present at Asn1. The Extracellular portion of the chain corresponds to 1–24 (NFSTPLSEYEEVSYESAGYTVLQI). The helical transmembrane segment at 25 to 47 (LPLVVLGVTFVLGVLGNGLVIWV) threads the bilayer. Over 48–58 (AGFRMTRTVTT) the chain is Cytoplasmic. A helical transmembrane segment spans residues 59-80 (ICYLNLALADFSFTATLPFLIV). Over 81 to 97 (SMAMGEKWPFGWFLCKL) the chain is Extracellular. A disulfide bridge connects residues Cys95 and Cys173. A helical membrane pass occupies residues 98 to 118 (IHIVVDINLFGSVFLIGFIAL). Residues 119 to 137 (DRCICVLHPVWAQNHRTVS) lie on the Cytoplasmic side of the membrane. Residues 138–159 (LAMKVIVGPWILALVLTLPVFL) traverse the membrane as a helical segment. Topologically, residues 160 to 202 (FLTTVTIPNGDTYCTFNFASWGGTPEKRLKVAITMLTARGIIR) are extracellular. A helical membrane pass occupies residues 203–223 (FVIGFSMPMSIVATCYGLIAA). The Cytoplasmic portion of the chain corresponds to 224–239 (KIHKKGMIKSSRPLRV). A helical transmembrane segment spans residues 240–263 (LTAVVASFFICWFPFQLVALLSTV). Topologically, residues 264-283 (WLKEILVDGKYKIINILVNP) are extracellular. Residues 284–303 (TSSLAFFNSCLNPMLYVFVG) form a helical membrane-spanning segment. Residues 304 to 348 (QDFRERLIHSLPTSLERALSEDSAPTNDTAASCASPPAETELQAM) are Cytoplasmic-facing. A disordered region spans residues 322–348 (LSEDSAPTNDTAASCASPPAETELQAM). The segment covering 326–335 (SAPTNDTAAS) has biased composition (polar residues).

The protein belongs to the G-protein coupled receptor 1 family. In terms of assembly, interacts with APP; the interaction takes place at the cell surface and the complex is then rapidly internalized.

Its subcellular location is the cell membrane. Functionally, low affinity receptor for N-formyl-methionyl peptides, which are powerful neutrophil chemotactic factors. Binding of FMLP to the receptor causes activation of neutrophils. This response is mediated via a G-protein that activates a phosphatidylinositol-calcium second messenger system. Receptor for the chemokine-like protein FAM19A5, mediating FAM19A5-stimulated macrophage chemotaxis and the inhibitory effect on TNFSF11/RANKL-induced osteoclast differentiation. The protein is N-formyl peptide receptor 2 (FPR2) of Macaca mulatta (Rhesus macaque).